The sequence spans 387 residues: 3-ketoacyl-CoA thiolase (387 aa).

The Acyl-thioester intermediate role is filled by cysteine 91. Residues histidine 343 and cysteine 373 each act as proton acceptor in the active site.

The protein belongs to the thiolase-like superfamily. Thiolase family. As to quaternary structure, heterotetramer of two alpha chains (FadB) and two beta chains (FadA).

It localises to the cytoplasm. The enzyme catalyses an acyl-CoA + acetyl-CoA = a 3-oxoacyl-CoA + CoA. It participates in lipid metabolism; fatty acid beta-oxidation. In terms of biological role, catalyzes the final step of fatty acid oxidation in which acetyl-CoA is released and the CoA ester of a fatty acid two carbons shorter is formed. The sequence is that of 3-ketoacyl-CoA thiolase from Serratia proteamaculans (strain 568).